The chain runs to 387 residues: 3-ketoacyl-CoA thiolase (387 aa).

The active-site Acyl-thioester intermediate is the cysteine 91. Residues histidine 343 and cysteine 373 each act as proton acceptor in the active site.

Belongs to the thiolase-like superfamily. Thiolase family. Heterotetramer of two alpha chains (FadB) and two beta chains (FadA).

It is found in the cytoplasm. It catalyses the reaction an acyl-CoA + acetyl-CoA = a 3-oxoacyl-CoA + CoA. Its pathway is lipid metabolism; fatty acid beta-oxidation. Functionally, catalyzes the final step of fatty acid oxidation in which acetyl-CoA is released and the CoA ester of a fatty acid two carbons shorter is formed. This chain is 3-ketoacyl-CoA thiolase, found in Escherichia coli O1:K1 / APEC.